The chain runs to 143 residues: Ribosomal RNA large subunit methyltransferase H (143 aa).

The S-adenosyl-L-methionine site is built by Leu-68 and Gly-95.

It belongs to the RNA methyltransferase RlmH family. In terms of assembly, homodimer.

The protein resides in the cytoplasm. The catalysed reaction is pseudouridine(1915) in 23S rRNA + S-adenosyl-L-methionine = N(3)-methylpseudouridine(1915) in 23S rRNA + S-adenosyl-L-homocysteine + H(+). Specifically methylates the pseudouridine at position 1915 (m3Psi1915) in 23S rRNA. This chain is Ribosomal RNA large subunit methyltransferase H, found in Mycoplasma mobile (strain ATCC 43663 / 163K / NCTC 11711) (Mesomycoplasma mobile).